Reading from the N-terminus, the 190-residue chain is Xanthine phosphoribosyltransferase (190 aa).

Xanthine-binding residues include L20 and N27. Position 129 to 133 (129 to 133) interacts with 5-phospho-alpha-D-ribose 1-diphosphate; that stretch reads ASGSA. K157 serves as a coordination point for xanthine.

It belongs to the purine/pyrimidine phosphoribosyltransferase family. Xpt subfamily. In terms of assembly, homodimer.

Its subcellular location is the cytoplasm. The enzyme catalyses XMP + diphosphate = xanthine + 5-phospho-alpha-D-ribose 1-diphosphate. The protein operates within purine metabolism; XMP biosynthesis via salvage pathway; XMP from xanthine: step 1/1. Converts the preformed base xanthine, a product of nucleic acid breakdown, to xanthosine 5'-monophosphate (XMP), so it can be reused for RNA or DNA synthesis. The chain is Xanthine phosphoribosyltransferase from Clostridium tetani (strain Massachusetts / E88).